A 323-amino-acid polypeptide reads, in one-letter code: ADP-L-glycero-D-manno-heptose-6-epimerase (323 aa).

NADP(+) is bound by residues 10–11, 31–32, Lys-38, Arg-53, 75–79, and Asn-92; these read FI, DN, and MGACS. The active-site Proton acceptor is the Tyr-143. Residue Lys-147 coordinates NADP(+). Residue Asn-170 coordinates substrate. NADP(+)-binding residues include Val-171 and Lys-179. Catalysis depends on Lys-179, which acts as the Proton acceptor. Residues Asp-181, Lys-188, 202-205, Arg-216, and Tyr-281 contribute to the substrate site; that span reads FRSC.

This sequence belongs to the NAD(P)-dependent epimerase/dehydratase family. HldD subfamily. Homopentamer. NADP(+) is required as a cofactor.

The catalysed reaction is ADP-D-glycero-beta-D-manno-heptose = ADP-L-glycero-beta-D-manno-heptose. It participates in nucleotide-sugar biosynthesis; ADP-L-glycero-beta-D-manno-heptose biosynthesis; ADP-L-glycero-beta-D-manno-heptose from D-glycero-beta-D-manno-heptose 7-phosphate: step 4/4. In terms of biological role, catalyzes the interconversion between ADP-D-glycero-beta-D-manno-heptose and ADP-L-glycero-beta-D-manno-heptose via an epimerization at carbon 6 of the heptose. The chain is ADP-L-glycero-D-manno-heptose-6-epimerase from Nitratidesulfovibrio vulgaris (strain DP4) (Desulfovibrio vulgaris).